The chain runs to 205 residues: Nuclear transcription factor Y subunit C-6 (205 aa).

The segment at 1–24 (MEPKSTTPPPPPPPPVLGAPVPYP) is disordered.

The protein belongs to the NFYC/HAP5 subunit family. Heterotrimeric transcription factor composed of three components, NF-YA, NF-YB and NF-YC. NF-YB and NF-YC must interact and dimerize for NF-YA association and DNA binding. Interacts with NFYB2. Interacts with NFYB8, NFYB10 and HD5/NFYB11.

The protein localises to the nucleus. It is found in the cytoplasm. Its function is as follows. Component of the NF-Y/HAP transcription factor complex. This Oryza sativa subsp. japonica (Rice) protein is Nuclear transcription factor Y subunit C-6.